Consider the following 985-residue polypeptide: Ankyrin repeat domain-containing protein 24 (985 aa).

ANK repeat units follow at residues 52 to 81, 85 to 114, 118 to 147, 151 to 180, and 184 to 213; these read EGKS…DVMS, AGYN…VVDI, SGWT…HMNP, SGAT…ATND, and QGRT…QLSI. Disordered stretches follow at residues 243–293, 311–360, 386–412, 476–503, and 594–614; these read RSSP…DRDA, IRGL…LGRE, QDEE…SAEE, YTEA…TAYQ, and DNAE…NPGM. Positions 291–488 form a coiled coil; it reads RDAYEEIVRL…AMHSQQQQQE (198 aa). Basic and acidic residues-rich tracts occupy residues 311–326 and 349–360; these read IRGL…KEPL and EKQEEKESLGRE.

In terms of assembly, homodimer. Interacts (via C-terminal domain) with TRIOBP (via C-terminal domain) isoform 4; recruits TRIOBP isoform 4 to stereocilia rootlets. Expressed in vestibular hair bundles.

It localises to the cell membrane. The protein resides in the cell projection. The protein localises to the stereocilium. Component of the stereocilia rootlet in hair cells of inner ear. Bridges the apical plasma membrane with the lower rootlet and maintains normal distribution of TRIOBP, thereby reinforcing stereocilia insertion points and organizing rootlets for hearing with long-term resilience. The chain is Ankyrin repeat domain-containing protein 24 (Ankrd24) from Mus musculus (Mouse).